The sequence spans 1171 residues: WD repeat-containing protein on Y chromosome (1171 aa).

WD repeat units follow at residues 157–201, 331–370, 374–413, 464–503, 516–555, 603–643, 748–787, and 831–870; these read EIPE…LRSA, RIPL…EPSA, GHNG…LLQT, THAA…RKII, IIDI…VVRN, FHTD…RRYN, KVGD…IPQA, and GHLK…LGTL. The disordered stretch occupies residues 1076–1171; it reads RTSFTLSDYT…TNTMKSSNSH (96 aa). Composition is skewed to polar residues over residues 1094 to 1106 and 1161 to 1171; these read SSRN…SSGS and KTNTMKSSNSH.

This is WD repeat-containing protein on Y chromosome from Drosophila grimshawi (Hawaiian fruit fly).